Here is a 176-residue protein sequence, read N- to C-terminus: Inorganic pyrophosphatase (176 aa).

Substrate is bound by residues lysine 30, arginine 44, and tyrosine 56. The Mg(2+) site is built by aspartate 66, aspartate 71, and aspartate 103. Substrate is bound at residue tyrosine 142.

The protein belongs to the PPase family. As to quaternary structure, homohexamer. Mg(2+) serves as cofactor.

The protein localises to the cytoplasm. It carries out the reaction diphosphate + H2O = 2 phosphate + H(+). Catalyzes the hydrolysis of inorganic pyrophosphate (PPi) forming two phosphate ions. The chain is Inorganic pyrophosphatase from Escherichia coli O157:H7.